We begin with the raw amino-acid sequence, 217 residues long: Large ribosomal subunit protein uL1 (217 aa).

Belongs to the universal ribosomal protein uL1 family.

This chain is Large ribosomal subunit protein uL1 (RPL10A), found in Eremothecium gossypii (strain ATCC 10895 / CBS 109.51 / FGSC 9923 / NRRL Y-1056) (Yeast).